Here is a 310-residue protein sequence, read N- to C-terminus: Protease HtpX homolog (310 aa).

A run of 2 helical transmembrane segments spans residues 16 to 36 (NAVL…VDVI) and 55 to 75 (IFPT…VVCI). Position 166 (His-166) interacts with Zn(2+). Residue Glu-167 is part of the active site. Residue His-170 participates in Zn(2+) binding. 2 consecutive transmembrane segments (helical) span residues 182–202 (VGIL…FFMG) and 214–234 (MILL…QMYL). A Zn(2+)-binding site is contributed by Glu-239.

Belongs to the peptidase M48B family. It depends on Zn(2+) as a cofactor.

It localises to the cell inner membrane. The polypeptide is Protease HtpX homolog (Helicobacter pylori (strain Shi470)).